Consider the following 302-residue polypeptide: 4-diphosphocytidyl-2-C-methyl-D-erythritol kinase (302 aa).

Lysine 11 is an active-site residue. ATP is bound at residue 93–103; sequence PVASGLAGGST. Aspartate 135 is an active-site residue.

This sequence belongs to the GHMP kinase family. IspE subfamily.

The catalysed reaction is 4-CDP-2-C-methyl-D-erythritol + ATP = 4-CDP-2-C-methyl-D-erythritol 2-phosphate + ADP + H(+). The protein operates within isoprenoid biosynthesis; isopentenyl diphosphate biosynthesis via DXP pathway; isopentenyl diphosphate from 1-deoxy-D-xylulose 5-phosphate: step 3/6. Catalyzes the phosphorylation of the position 2 hydroxy group of 4-diphosphocytidyl-2C-methyl-D-erythritol. This chain is 4-diphosphocytidyl-2-C-methyl-D-erythritol kinase, found in Gloeobacter violaceus (strain ATCC 29082 / PCC 7421).